The primary structure comprises 301 residues: PWI domain-containing protein C825.05c (301 aa).

The 112-residue stretch at 26-137 (STKFPASYDT…YGIPEKFILE (112 aa)) folds into the PWI domain. Position 86 is a phosphoserine (serine 86). Composition is skewed to basic and acidic residues over residues 145–182 (LKDR…ERNG), 189–205 (TLDR…ERNR), and 215–229 (RFSE…DIRS). Residues 145–301 (LKDRTEASKE…ESDSGTQKHD (157 aa)) are disordered. Phosphoserine is present on serine 199. Residues 244–253 (PTRRRERHYR) show a composition bias toward basic residues. Positions 254–289 (TRDDEGFDEFGRSRDGRWRESRTSYREKHRYDRDAL) are enriched in basic and acidic residues. Residues 290–301 (SSESDSGTQKHD) show a composition bias toward polar residues. Phosphoserine is present on serine 291.

The protein localises to the nucleus. This chain is PWI domain-containing protein C825.05c, found in Schizosaccharomyces pombe (strain 972 / ATCC 24843) (Fission yeast).